Here is a 299-residue protein sequence, read N- to C-terminus: MAQLIDGKKLAEDVVSTVKTETEKLVAATGVVPGIAVVIVGEDPASQVYVASKSRKAKECGFHSVQHDLPETASEQELLNLIEGLNNDPAIHGILVQLPLPGHIDSGRVIQTIAPEKDVDGFHFINVGKLGTGEVETAFVPCTPAGAMIMIERVHGRDLSGLNAVVIGRSNIVGKPMFNLLLAANATVTVAHSRTKDLPAIARNADILVAAVGRPQMVKGDWVKPGATVIDVGINRIPAPERGEGKTRLVGDVDFAEAEKVAGAITPVPGGVGPMTIAMLMANTLTAACRSAGMKKPVF.

NADP(+)-binding positions include 168–170 (GRS), serine 193, and isoleucine 234.

The protein belongs to the tetrahydrofolate dehydrogenase/cyclohydrolase family. Homodimer.

It carries out the reaction (6R)-5,10-methylene-5,6,7,8-tetrahydrofolate + NADP(+) = (6R)-5,10-methenyltetrahydrofolate + NADPH. The catalysed reaction is (6R)-5,10-methenyltetrahydrofolate + H2O = (6R)-10-formyltetrahydrofolate + H(+). The protein operates within one-carbon metabolism; tetrahydrofolate interconversion. Functionally, catalyzes the oxidation of 5,10-methylenetetrahydrofolate to 5,10-methenyltetrahydrofolate and then the hydrolysis of 5,10-methenyltetrahydrofolate to 10-formyltetrahydrofolate. This Brucella abortus (strain S19) protein is Bifunctional protein FolD.